The chain runs to 215 residues: Large ribosomal subunit protein eL15 (215 aa).

The segment at 179–215 (GTVKHKWKKKEKEREQKKRHEATKYYRLQNYDKLPGK) is disordered. The span at 188 to 202 (KEKEREQKKRHEATK) shows a compositional bias: basic and acidic residues.

The protein belongs to the eukaryotic ribosomal protein eL15 family.

This is Large ribosomal subunit protein eL15 from Sulfurisphaera tokodaii (strain DSM 16993 / JCM 10545 / NBRC 100140 / 7) (Sulfolobus tokodaii).